Consider the following 178-residue polypeptide: MSKTGAKISFYEDRNFQGRRYDCDCDCVDFRSYLSRCNSIRVEGGTWAVYERPNFSGHMYILPQGEYPEYQRWMGLNDRLGSCRAVHLSSGGQYKIQIFEKGDFSGQMYETTEDCPSTMERFHLREIHSCKVLEGTWIFYELPSYHGRQYLLDKKEYRKPVDWGAASPAVQSFRRIVE.

The residue at position 2 (S2) is an N-acetylserine. Positions S2–G5 are N-terminal arm. Beta/gamma crystallin 'Greek key' domains follow at residues A6–G44 and G45–H87. The interval L88–Q93 is connecting peptide. Beta/gamma crystallin 'Greek key' domains follow at residues Y94–E134 and G135–V177.

This sequence belongs to the beta/gamma-crystallin family. In terms of assembly, monomer.

Functionally, crystallins are the dominant structural components of the vertebrate eye lens. The chain is Gamma-crystallin S (Crygs) from Rattus norvegicus (Rat).